Here is a 418-residue protein sequence, read N- to C-terminus: Xanthosine permease (418 aa).

Residues 1–9 (MSIAMRLKV) are Cytoplasmic-facing. Residues 10–30 (MSFLQYFIWGSWLVTLGSYMI) form a helical membrane-spanning segment. Over 31 to 41 (NTLHFTGANVG) the chain is Periplasmic. Residues 42–62 (MVYSSKGIAAIIMPGIMGIIA) form a helical membrane-spanning segment. Over 63–70 (DKWLRAER) the chain is Cytoplasmic. A run of 2 helical transmembrane segments spans residues 71–91 (AYML…SVTD) and 92–112 (PDMM…TIAL). Residues 113–136 (SNSVSYSCLAQAGLDPVTAFPPIR) are Cytoplasmic-facing. Residues 137–157 (VFGTVGFIVAMWAVSLLHLEL) traverse the membrane as a helical segment. Over 158-159 (SS) the chain is Periplasmic. The helical transmembrane segment at 160 to 180 (LQLYIASGASLLLSAYALTLP) threads the bilayer. Residues 181–209 (KIPVAEKKATTSLASKLGLDAFVLFKNPR) lie on the Cytoplasmic side of the membrane. Residues 210–230 (MAIFFLFAMMLGAVLQITNVF) form a helical membrane-spanning segment. Residues 231–254 (GNPFLHDFARNPEFADSFVVKYPS) are Periplasmic-facing. Residues 255–275 (ILLSVSQMAEVGFILTIPFFL) form a helical membrane-spanning segment. Residues 276–277 (KR) are Cytoplasmic-facing. The helical transmembrane segment at 278–298 (FGIKTVMLMSMVAWTLRFGFF) threads the bilayer. At 299–306 (AYGDPSTT) the chain is on the periplasmic side. A helical membrane pass occupies residues 307–327 (GFILLLLSMIVYGCAFDFFNI). Over 328-348 (SGSVFVEQEVDSSIRASAQGL) the chain is Cytoplasmic. Residues 349–369 (FMTMVNGVGAWVGSILSGMAV) traverse the membrane as a helical segment. Over 370–381 (DYFSVDGVKDWQ) the chain is Periplasmic. Residues 382-402 (TIWLVFAGYALFLAVIFFFGF) form a helical membrane-spanning segment. Over 403–418 (KYNHDPEKIKHRAVTH) the chain is Cytoplasmic.

This sequence belongs to the major facilitator superfamily. Nucleoside:H(+) symporter (NHS) (TC 2.A.1.10) family.

Its subcellular location is the cell inner membrane. The catalysed reaction is xanthosine(in) + H(+)(in) = xanthosine(out) + H(+)(out). Its activity is regulated as follows. Transport is abolished by the proton uncoupler 2,4-dinitrophenol. Its function is as follows. Uptake of xanthosine. Can also transport other nucleosides such as inosine, adenosine, cytidine, uridine and thymidine. Transport is driven by a proton motive force. In Escherichia coli (strain K12), this protein is Xanthosine permease.